Here is a 110-residue protein sequence, read N- to C-terminus: METIAKHRHARSSAQKVRLVADLIRGKKVSQALETLAYTNKKAAGLVKKVLESAIANAEHNDGADIDDLKVTKIFVDEGPSMKRIMPRAKGRADRILKRTSHITVVVSDR.

Belongs to the universal ribosomal protein uL22 family. Part of the 50S ribosomal subunit.

This protein binds specifically to 23S rRNA; its binding is stimulated by other ribosomal proteins, e.g. L4, L17, and L20. It is important during the early stages of 50S assembly. It makes multiple contacts with different domains of the 23S rRNA in the assembled 50S subunit and ribosome. In terms of biological role, the globular domain of the protein is located near the polypeptide exit tunnel on the outside of the subunit, while an extended beta-hairpin is found that lines the wall of the exit tunnel in the center of the 70S ribosome. The protein is Large ribosomal subunit protein uL22 of Yersinia enterocolitica serotype O:8 / biotype 1B (strain NCTC 13174 / 8081).